We begin with the raw amino-acid sequence, 327 residues long: Endo-1,4-beta-xylanase A (327 aa).

The GH10 domain occupies 1 to 323 (AASGLEAAMK…KPSYTSTLNT (323 aa)). A disulfide bridge links cysteine 81 with cysteine 123. N-linked (GlcNAc...) asparagine glycosylation occurs at asparagine 101. Catalysis depends on glutamate 131, which acts as the Proton donor. Catalysis depends on glutamate 245, which acts as the Nucleophile. Cysteine 273 and cysteine 279 form a disulfide bridge.

Belongs to the glycosyl hydrolase 10 (cellulase F) family. As to quaternary structure, monomer.

It is found in the secreted. Its subcellular location is the extracellular space. It carries out the reaction Endohydrolysis of (1-&gt;4)-beta-D-xylosidic linkages in xylans.. The protein operates within glycan degradation; xylan degradation. In terms of biological role, catalyzes the hydrolysis of the internal glycosidic bonds in heteroxylans, releasing mainly xylobiose and xylotriose. Most active on oat-spelt xylan. The sequence is that of Endo-1,4-beta-xylanase A from Fusarium oxysporum f. sp. lycopersici (strain 4287 / CBS 123668 / FGSC 9935 / NRRL 34936) (Fusarium vascular wilt of tomato).